A 578-amino-acid polypeptide reads, in one-letter code: Zinc finger-containing ubiquitin peptidase 1 (578 aa).

The C2H2-type 1 zinc-finger motif lies at 2–24 (LSCNICGETVTSEPDMKAHLIVH). Residues 29–52 (IICPFCKLSGVNYDEMCFHIETAH) form a C2H2-type 2; atypical zinc finger. 2 consecutive C2H2-type zinc fingers follow at residues 154-177 (PECP…KTKH) and 193-215 (YDCP…VDLH). The MIU stretch occupies residues 226–248 (DRVQCSGDLQLAHQLQQEEDRKR). Residues 249–274 (RSEESRQEIEEFQKLQRQYGLDNSGG) form a zUBD/ZHA region. The residue at position 262 (Lys-262) is an N6-acetyllysine. Cys-360 (nucleophile) is an active-site residue. Residue His-491 is the Proton acceptor of the active site. Asp-512 is an active-site residue.

Belongs to the peptidase C78 family. ZUFSP subfamily. As to quaternary structure, interacts with RPA1 and RPA2.

It is found in the cytoplasm. The protein resides in the nucleus. It carries out the reaction Thiol-dependent hydrolysis of ester, thioester, amide, peptide and isopeptide bonds formed by the C-terminal Gly of ubiquitin (a 76-residue protein attached to proteins as an intracellular targeting signal).. In terms of biological role, deubiquitinase with endodeubiquitinase activity that specifically interacts with and cleaves 'Lys-63'-linked long polyubiquitin chains. Shows only weak activity against 'Lys-11' and 'Lys-48'-linked chains. Plays an important role in genome stability pathways, functioning to prevent spontaneous DNA damage and also promote cellular survival in response to exogenous DNA damage. Modulates the ubiquitination status of replication protein A (RPA) complex proteins in response to replication stress. In Homo sapiens (Human), this protein is Zinc finger-containing ubiquitin peptidase 1.